The primary structure comprises 308 residues: Protein translocase subunit SecF (308 aa).

Helical transmembrane passes span 12-32 (YFIFSTFMILFSLFSIFTKGF), 127-147 (AKNALWALALGSILILIYITI), 152-172 (IYALSSVLALLHDVLVTIGFI), 182-202 (PFIAAILTILGYSMNDTIVIF), 234-254 (VYTSLTTLLALAALLIFGGST), and 262-282 (LLVGIVYGTYSSIWLASPLVY).

The protein belongs to the SecD/SecF family. SecF subfamily. As to quaternary structure, forms a complex with SecD. Part of the essential Sec protein translocation apparatus which comprises SecA, SecYEG and auxiliary proteins SecDF. Other proteins may also be involved.

It is found in the cell inner membrane. In terms of biological role, part of the Sec protein translocase complex. Interacts with the SecYEG preprotein conducting channel. SecDF uses the proton motive force (PMF) to complete protein translocation after the ATP-dependent function of SecA. This Sebaldella termitidis (strain ATCC 33386 / NCTC 11300) protein is Protein translocase subunit SecF.